A 513-amino-acid chain; its full sequence is ATP synthase subunit alpha (513 aa).

169–176 (GDRQTGKT) contributes to the ATP binding site.

Belongs to the ATPase alpha/beta chains family. F-type ATPases have 2 components, CF(1) - the catalytic core - and CF(0) - the membrane proton channel. CF(1) has five subunits: alpha(3), beta(3), gamma(1), delta(1), epsilon(1). CF(0) has three main subunits: a(1), b(2) and c(9-12). The alpha and beta chains form an alternating ring which encloses part of the gamma chain. CF(1) is attached to CF(0) by a central stalk formed by the gamma and epsilon chains, while a peripheral stalk is formed by the delta and b chains.

The protein resides in the cell inner membrane. The catalysed reaction is ATP + H2O + 4 H(+)(in) = ADP + phosphate + 5 H(+)(out). Its function is as follows. Produces ATP from ADP in the presence of a proton gradient across the membrane. The alpha chain is a regulatory subunit. In Enterobacter sp. (strain 638), this protein is ATP synthase subunit alpha.